A 704-amino-acid chain; its full sequence is Elongation factor G 1 (704 aa).

The region spanning 8 to 290 is the tr-type G domain; sequence ERYRNIGICA…CVVEYMPAPT (283 aa). Residues 17–24, 88–92, and 142–145 contribute to the GTP site; these read AHVDAGKT, DTPGH, and NKMD.

This sequence belongs to the TRAFAC class translation factor GTPase superfamily. Classic translation factor GTPase family. EF-G/EF-2 subfamily.

It localises to the cytoplasm. Its function is as follows. Catalyzes the GTP-dependent ribosomal translocation step during translation elongation. During this step, the ribosome changes from the pre-translocational (PRE) to the post-translocational (POST) state as the newly formed A-site-bound peptidyl-tRNA and P-site-bound deacylated tRNA move to the P and E sites, respectively. Catalyzes the coordinated movement of the two tRNA molecules, the mRNA and conformational changes in the ribosome. The sequence is that of Elongation factor G 1 from Pseudoalteromonas translucida (strain TAC 125).